A 763-amino-acid chain; its full sequence is MWRLVAESAAGGTYHFLTGTDYVVGRKNCAILIPEDQSISRCHATLSVSHPSANLGQTNAASVLSIKDSSKYGTTVNGDKMNPAVPRNLKSGDKVTFGVFNSKYRVEYEPLVVCSSCLDNSEKNSLNQNLIHLGGHVLNNWTEKSTHLVMTSIKVTIKTICALICCKPIIKPDYFCELLHAIQEKRPLPDYRSFIPSVDEPSLTPESLDLSENVKRKSIFKDKVFLFLNAKQYKKLSPAVLFGGGKTDLLMGELKDASVLDNPATCVIDVAMTESQLSESQSTQPWITSTLDLLQSKGLRTIPEAEIGLAVINVSTEIYCNPRRRAASGTEAGTSKKMNVLSSTLCQGIAVDETILPAPTLDITAYAANTEPQDQTGTSWMNISGVREVKETPGNSSSHSRSKGCLQKDPKSGSSSNDLRQTLFREDETDTRKNTPSLLPTKSSARDVTKTSQKLQPTKKIDSYFQSLAKKRDRAEDEKEASSSKLPRVETLSSQTLEEKFPPVTQTLEEENFDSDLDMELAMSCDQILNDSMGSKAAMPEDSTVKKRKVPDDHVVEESDVDSDEGIRANAEQNDTKSDINVTKRRKVDSEIEGTKEPTIKPREIGTKAQVKTNSPEMAPAIRKEIEVKKELDIKKEPKSQWEESKFVPDLQGETDALPSRLLLTEFKSLVVSRPVRNNNATSNSSNGKCHNFKKFKKVAYPGAGSFPNIIGGSDLIAHDRKKNAELEQWLRQEVEEQTQQVREESLAEDLFRYNPKPSKRRR.

The FHA domain maps to Tyr22–Met81. 2 BRCT domains span residues Ser102 to Leu179 and Lys215 to Arg324. Disordered stretches follow at residues Val389 to Thr496, Ser535 to Glu593, and Gln738 to Arg763. Positions Leu423–Lys433 are enriched in basic and acidic residues. Residues Asn434 to Ser443 show a composition bias toward polar residues. The short motif at Ala469–Arg474 is the Nuclear localization signal element. Residues Asp473–Ser482 show a composition bias toward basic and acidic residues. Residues Val742–Phe752 are compositionally biased toward basic and acidic residues. The FxF/Y motif motif lies at Ala748 to Lys757.

This sequence belongs to the Nibrin family. As to quaternary structure, component of the MRN complex composed of two heterodimers rad50 and mre11 associated with a single nbn.

It localises to the nucleus. Its subcellular location is the chromosome. The protein localises to the PML body. It is found in the telomere. Its function is as follows. Component of the MRN complex, which plays a central role in double-strand break (DSB) repair, DNA recombination, maintenance of telomere integrity and meiosis. The MRN complex is involved in the repair of DNA double-strand breaks (DSBs) via homologous recombination (HR), an error-free mechanism which primarily occurs during S and G2 phases. The complex (1) mediates the end resection of damaged DNA, which generates proper single-stranded DNA, a key initial steps in HR, and is (2) required for the recruitment of other repair factors and efficient activation of ATM and ATR upon DNA damage. The MRN complex possesses single-strand endonuclease activity and double-strand-specific 3'-5' exonuclease activity, which are provided by MRE11, to initiate end resection, which is required for single-strand invasion and recombination. Within the MRN complex, nbn acts as a protein-protein adapter, which specifically recognizes and binds phosphorylated proteins, promoting their recruitment to DNA damage sites. Recruits mre11 and rad50 components of the MRN complex to DSBs in response to DNA damage. Promotes the recruitment of PI3/PI4-kinase family members atm, atr, and probably DNA-PKcs to the DNA damage sites, activating their functions. Mediates the recruitment of phosphorylated rbbp8/CtIP to DSBs, leading to cooperation between the MRN complex and rbbp8/CtIP to initiate end resection. The MRN complex promotes recruitment of topbp1 to DNA damage sites. The MRN complex and rbbp8/CtIP are also required for chromosome alignment during metaphase. This is Nibrin from Xenopus laevis (African clawed frog).